A 351-amino-acid polypeptide reads, in one-letter code: Magnesium-protoporphyrin IX monomethyl ester [oxidative] cyclase 1 (351 aa).

Belongs to the AcsF family. The cofactor is Fe cation.

The catalysed reaction is Mg-protoporphyrin IX 13-monomethyl ester + 3 NADPH + 3 O2 + 2 H(+) = 3,8-divinyl protochlorophyllide a + 3 NADP(+) + 5 H2O. The protein operates within porphyrin-containing compound metabolism; chlorophyll biosynthesis (light-independent). Catalyzes the formation of the isocyclic ring in chlorophyll biosynthesis. Mediates the cyclase reaction, which results in the formation of divinylprotochlorophyllide (Pchlide) characteristic of all chlorophylls from magnesium-protoporphyrin IX 13-monomethyl ester (MgPMME). The chain is Magnesium-protoporphyrin IX monomethyl ester [oxidative] cyclase 1 from Nostoc sp. (strain PCC 7120 / SAG 25.82 / UTEX 2576).